The sequence spans 277 residues: Large ribosomal subunit protein uL2 (277 aa).

Disordered stretches follow at residues Lys-37 to His-60 and Val-223 to Asp-265. Residues Ser-39–Ile-49 are compositionally biased toward polar residues. Over residues Thr-50–His-60 the composition is skewed to basic residues. Positions Asp-229–Glu-244 are enriched in basic and acidic residues.

It belongs to the universal ribosomal protein uL2 family. Part of the 50S ribosomal subunit. Forms a bridge to the 30S subunit in the 70S ribosome.

In terms of biological role, one of the primary rRNA binding proteins. Required for association of the 30S and 50S subunits to form the 70S ribosome, for tRNA binding and peptide bond formation. It has been suggested to have peptidyltransferase activity; this is somewhat controversial. Makes several contacts with the 16S rRNA in the 70S ribosome. The chain is Large ribosomal subunit protein uL2 from Neisseria meningitidis serogroup A / serotype 4A (strain DSM 15465 / Z2491).